The sequence spans 355 residues: uncharacterized protein (355 aa).

An N-terminal signal peptide occupies residues 1 to 21; it reads MQKKVLFNDIVFVCFPITDNG. N-linked (GlcNAc...) asparagine; by host glycosylation is found at Asn-20, Asn-78, Asn-87, Asn-156, Asn-159, and Asn-274. Residues 22–331 are Virion surface-facing; sequence SIIISDIGYS…SSTSFFSRYG (310 aa). Positions 288–317 are disordered; sequence GSKSTPNGPNGPTPTPSNGPNGPTPVPGIP. Pro residues predominate over residues 296–317; the sequence is PNGPTPTPSNGPNGPTPVPGIP. Asn-320 is a glycosylation site (N-linked (GlcNAc...) asparagine; by host). The helical transmembrane segment at 332 to 352 threads the bilayer; that stretch reads LWIIIAIILLIVIISAVGIYF. The Intravirion segment spans residues 353–355; the sequence is YLR.

The protein localises to the host membrane. The protein resides in the virion. This is an uncharacterized protein from Acanthamoeba polyphaga mimivirus (APMV).